The primary structure comprises 691 residues: Beta-galactosidase III (691 aa).

Arg121 and Asn159 together coordinate substrate. Residue Glu160 is the Proton donor of the active site. The Nucleophile role is filled by Glu318. Substrate-binding positions include Trp326 and Glu366 to His369.

It belongs to the glycosyl hydrolase 42 family.

It carries out the reaction Hydrolysis of terminal non-reducing beta-D-galactose residues in beta-D-galactosides.. Its function is as follows. Specific for beta-D-anomer-linked galactoside substrates. Hydrolyzes o-nitrophenyl-beta-D-galactopyranoside (ONPG), chromogen 5-bromo-4-chloro-3-indolyl-beta-D-galactopyranoside (X-gal) and to a lesser extent lactose. Hydrolyzes p-nitrophenyl-beta-D-galacturonide very slightly. Does not hydrolyze maltose, sucrose, raffinose or melibiose. Has some transgalactosylation activity yielding galacto-oligosaccharides (GaOS), including O-beta-D-galactopyranosyl-(1,3)-O-beta-D-galactopyranosyl-(1-4)-D-glucopyranose. The sequence is that of Beta-galactosidase III from Bifidobacterium longum subsp. infantis.